Consider the following 212-residue polypeptide: Hemagglutinin 2 (212 aa).

The protein resides in the secreted. Functionally, induces agglutination of neuraminidase-treated erythrocytes. The sequence is that of Hemagglutinin 2 (hag2) from Eikenella corrodens.